Here is an 85-residue protein sequence, read N- to C-terminus: UPF0335 protein BARBAKC583_0130 (85 aa).

It belongs to the UPF0335 family.

In Bartonella bacilliformis (strain ATCC 35685 / KC583 / Herrer 020/F12,63), this protein is UPF0335 protein BARBAKC583_0130.